The primary structure comprises 304 residues: Probable 5-dehydro-4-deoxyglucarate dehydratase (304 aa).

This sequence belongs to the DapA family.

The catalysed reaction is 5-dehydro-4-deoxy-D-glucarate + H(+) = 2,5-dioxopentanoate + CO2 + H2O. It functions in the pathway carbohydrate acid metabolism; D-glucarate degradation; 2,5-dioxopentanoate from D-glucarate: step 2/2. This chain is Probable 5-dehydro-4-deoxyglucarate dehydratase, found in Arthrobacter sp. (strain FB24).